The primary structure comprises 247 residues: Flagellar brake protein YcgR 2 (247 aa).

The 114-residue stretch at 124 to 237 (QRREYFRVET…DETRIQRYIA (114 aa)) folds into the PilZ domain.

Belongs to the YcgR family. As to quaternary structure, monomer. Interacts with the flagellar basal bodies.

It is found in the bacterial flagellum basal body. In terms of biological role, acts as a flagellar brake, regulating swimming and swarming in a bis-(3'-5') cyclic diguanylic acid (c-di-GMP)-dependent manner. Binds 1 c-di-GMP dimer per subunit. Increasing levels of c-di-GMP lead to decreased motility. The chain is Flagellar brake protein YcgR 2 from Dechloromonas aromatica (strain RCB).